A 505-amino-acid chain; its full sequence is Glycerol kinase (505 aa).

Thr14 lines the ADP pocket. Residues Thr14, Thr15, and Ser16 each coordinate ATP. Position 14 (Thr14) interacts with sn-glycerol 3-phosphate. Arg18 lines the ADP pocket. Sn-glycerol 3-phosphate contacts are provided by Arg84, Glu85, Tyr136, and Asp246. Arg84, Glu85, Tyr136, Asp246, and Gln247 together coordinate glycerol. Positions 268 and 311 each coordinate ADP. ATP is bound by residues Thr268, Gly311, Gln315, and Gly412. Residues Gly412 and Asn416 each contribute to the ADP site.

Belongs to the FGGY kinase family.

It carries out the reaction glycerol + ATP = sn-glycerol 3-phosphate + ADP + H(+). Its pathway is polyol metabolism; glycerol degradation via glycerol kinase pathway; sn-glycerol 3-phosphate from glycerol: step 1/1. Inhibited by fructose 1,6-bisphosphate (FBP). Functionally, key enzyme in the regulation of glycerol uptake and metabolism. Catalyzes the phosphorylation of glycerol to yield sn-glycerol 3-phosphate. The sequence is that of Glycerol kinase from Vibrio campbellii (strain ATCC BAA-1116).